Here is a 340-residue protein sequence, read N- to C-terminus: MQPYTAPSEIALRQLDYFADKHVLVAGEVEDRFPIELRQYCASVSVFTTHYGYYSQLKAYPEITRYFGEQLTADLNADLILLYWPKAKQEAEYLLAMLLAKLGTGTEIVVVGENRSGVKSIEKMFAAYGPIHKYDSARRCSFYWGHCVHTPAAFDIEQWFKSYAVDYQGHELTIRSLPGVFSHGEFDLGSRLLLDTLPPLSGKVIDIGSGAGVLGCVMAKLNPHIELEMTDISALAIRSSQETLVANQLHGHVYPSDMFSDTGHHYNYIVTNPPFHSGLETSYSATERLLAESVDHLASGGSIWVVANSFLKYPPILEQAFGHCDIAAKTNKFAIYHAKK.

The protein belongs to the methyltransferase superfamily. RsmC family. Monomer.

It is found in the cytoplasm. It carries out the reaction guanosine(1207) in 16S rRNA + S-adenosyl-L-methionine = N(2)-methylguanosine(1207) in 16S rRNA + S-adenosyl-L-homocysteine + H(+). In terms of biological role, specifically methylates the guanine in position 1207 of 16S rRNA in the 30S particle. The protein is Ribosomal RNA small subunit methyltransferase C of Vibrio cholerae serotype O1 (strain ATCC 39541 / Classical Ogawa 395 / O395).